Consider the following 273-residue polypeptide: Large ribosomal subunit protein uL2 (273 aa).

Residues 221–273 (RGTAMNPVDHPHGGGEGRNFGKHPVTPWGVQTKGKKTRHNKRTDKFIVRRRGK) form a disordered region. A compositionally biased stretch (basic residues) spans 253–273 (KGKKTRHNKRTDKFIVRRRGK).

It belongs to the universal ribosomal protein uL2 family. Part of the 50S ribosomal subunit. Forms a bridge to the 30S subunit in the 70S ribosome.

In terms of biological role, one of the primary rRNA binding proteins. Required for association of the 30S and 50S subunits to form the 70S ribosome, for tRNA binding and peptide bond formation. It has been suggested to have peptidyltransferase activity; this is somewhat controversial. Makes several contacts with the 16S rRNA in the 70S ribosome. The polypeptide is Large ribosomal subunit protein uL2 (Glaesserella parasuis serovar 5 (strain SH0165) (Haemophilus parasuis)).